A 497-amino-acid chain; its full sequence is Probable malate:quinone oxidoreductase (497 aa).

The protein belongs to the MQO family. Requires FAD as cofactor.

The enzyme catalyses (S)-malate + a quinone = a quinol + oxaloacetate. It functions in the pathway carbohydrate metabolism; tricarboxylic acid cycle; oxaloacetate from (S)-malate (quinone route): step 1/1. This Rhodopseudomonas palustris (strain TIE-1) protein is Probable malate:quinone oxidoreductase.